The following is a 1141-amino-acid chain: Isoleucine--tRNA ligase (1141 aa).

Residues 50–60 carry the 'HIGH' region motif; it reads PSANGMPGIHH. A 'KMSKS' region motif is present at residues 689–693; sequence KMSKR. Lys-692 lines the ATP pocket.

Belongs to the class-I aminoacyl-tRNA synthetase family. IleS type 2 subfamily. In terms of assembly, monomer. Zn(2+) is required as a cofactor.

It is found in the cytoplasm. The enzyme catalyses tRNA(Ile) + L-isoleucine + ATP = L-isoleucyl-tRNA(Ile) + AMP + diphosphate. Functionally, catalyzes the attachment of isoleucine to tRNA(Ile). As IleRS can inadvertently accommodate and process structurally similar amino acids such as valine, to avoid such errors it has two additional distinct tRNA(Ile)-dependent editing activities. One activity is designated as 'pretransfer' editing and involves the hydrolysis of activated Val-AMP. The other activity is designated 'posttransfer' editing and involves deacylation of mischarged Val-tRNA(Ile). The protein is Isoleucine--tRNA ligase of Bacteroides fragilis (strain ATCC 25285 / DSM 2151 / CCUG 4856 / JCM 11019 / LMG 10263 / NCTC 9343 / Onslow / VPI 2553 / EN-2).